A 293-amino-acid polypeptide reads, in one-letter code: Large ribosomal subunit protein uL2c (293 aa).

The segment at 224–245 (VMNPVDHPHGGGEGKSPIGRAR) is disordered.

This sequence belongs to the universal ribosomal protein uL2 family. Part of the 50S ribosomal subunit.

It localises to the plastid. It is found in the chloroplast. This is Large ribosomal subunit protein uL2c (rpl2) from Pyropia yezoensis (Susabi-nori).